A 320-amino-acid polypeptide reads, in one-letter code: Transcription termination/antitermination protein NusG (320 aa).

Belongs to the NusG family.

Its function is as follows. Participates in transcription elongation, termination and antitermination. The sequence is that of Transcription termination/antitermination protein NusG from Mycoplasma pneumoniae (strain ATCC 29342 / M129 / Subtype 1) (Mycoplasmoides pneumoniae).